The primary structure comprises 904 residues: Phosphatidate phosphatase PAH1 (904 aa).

Residues 1-112 (MSLVGRVGSL…SGSENNNGNQ (112 aa)) form an N-LIP region. Disordered regions lie at residues 254–293 (EESS…HDAE), 305–326 (ELTK…EDRN), 440–470 (GIIE…DRKT), 574–595 (VEEN…SSSG), and 612–655 (EHTG…QLVR). 3 stretches are compositionally biased toward basic and acidic residues: residues 265–293 (DKVD…HDAE), 311–326 (ENVK…EDRN), and 449–470 (SERV…DRKT). Positions 631–642 (GLQNSPETQSTT) are enriched in polar residues. The segment at 703 to 857 (IVISDVDGTI…FIINPKGEVA (155 aa)) is C-LIP. Positions 707–711 (DVDGT) match the DXDXT motif motif.

This sequence belongs to the lipin family. Mg(2+) is required as a cofactor. In terms of tissue distribution, expressed in roots, leaves, stems, flowers, siliques, embryos and mature seeds.

It localises to the cytoplasm. It is found in the cytosol. The enzyme catalyses a 1,2-diacyl-sn-glycero-3-phosphate + H2O = a 1,2-diacyl-sn-glycerol + phosphate. Magnesium-dependent phosphatidate phosphatase which catalyzes the dephosphorylation of phosphatidate to yield diacylglycerol. Acts redundantly with PAH2 to repress phospholipid biosynthesis at the endoplasmic reticulum (ER). May function indirectly as repressor of multiple enzymes involved in phospholipid biosynthesis. Is involved in the pathway of galactolipid synthesis in the ER, which is required for the membrane lipid remodeling, an essential adaptation mechanism to cope with phosphate starvation. The sequence is that of Phosphatidate phosphatase PAH1 (PAH1) from Arabidopsis thaliana (Mouse-ear cress).